Here is a 413-residue protein sequence, read N- to C-terminus: Serine hydroxymethyltransferase (413 aa).

(6S)-5,6,7,8-tetrahydrofolate contacts are provided by residues L117 and 121-123; that span reads GHL. An N6-(pyridoxal phosphate)lysine modification is found at K226. 349–351 lines the (6S)-5,6,7,8-tetrahydrofolate pocket; it reads SPF.

The protein belongs to the SHMT family. In terms of assembly, homodimer. Pyridoxal 5'-phosphate is required as a cofactor.

The protein resides in the cytoplasm. The enzyme catalyses (6R)-5,10-methylene-5,6,7,8-tetrahydrofolate + glycine + H2O = (6S)-5,6,7,8-tetrahydrofolate + L-serine. Its pathway is one-carbon metabolism; tetrahydrofolate interconversion. The protein operates within amino-acid biosynthesis; glycine biosynthesis; glycine from L-serine: step 1/1. In terms of biological role, catalyzes the reversible interconversion of serine and glycine with tetrahydrofolate (THF) serving as the one-carbon carrier. This reaction serves as the major source of one-carbon groups required for the biosynthesis of purines, thymidylate, methionine, and other important biomolecules. Also exhibits THF-independent aldolase activity toward beta-hydroxyamino acids, producing glycine and aldehydes, via a retro-aldol mechanism. The sequence is that of Serine hydroxymethyltransferase from Pelobacter propionicus (strain DSM 2379 / NBRC 103807 / OttBd1).